Here is a 345-residue protein sequence, read N- to C-terminus: Cytoplasmic envelopment protein 2 (345 aa).

Positions 26 to 35 (KLVGKSRKHR) are nuclear localization signal 1. Residues 55-63 (CILCQLLLL) form a nuclear export signal region. Residues 90-94 (RRRRR) are nuclear localization signal 2.

This sequence belongs to the herpesviridae cytoplasmic envelopment protein 2 family. Interacts with cytoplasmic envelopment protein 3 and with the capsid. Interacts with host STING1; this interaction prevents viral DNA-triggered antiviral immune response.

The protein resides in the virion tegument. The protein localises to the host cytoplasm. Its subcellular location is the host nucleus. Functionally, plays a critical role in cytoplasmic virus egress. Participates in the final step of tegumentation and envelope acquisition within the host cytoplasm by directly interacting with the capsid. Upon virion binding to target cell, a signaling cascade is triggered to disrupt the interaction with the capsid, thereby preparing capsid uncoating. Additionally, antagonizes the viral DNA-triggered antiviral immune response by targeting host STING1 and preventing its dimerization and trafficking. The protein is Cytoplasmic envelopment protein 2 (UL94) of Human cytomegalovirus (strain AD169) (HHV-5).